The sequence spans 334 residues: RNA 3'-terminal phosphate cyclase (334 aa).

279 to 282 provides a ligand contact to ATP; sequence HMGD. Catalysis depends on H303, which acts as the Tele-AMP-histidine intermediate.

The protein belongs to the RNA 3'-terminal cyclase family. Type 1 subfamily.

It is found in the cytoplasm. The catalysed reaction is a 3'-end 3'-phospho-ribonucleotide-RNA + ATP = a 3'-end 2',3'-cyclophospho-ribonucleotide-RNA + AMP + diphosphate. In terms of biological role, catalyzes the conversion of 3'-phosphate to a 2',3'-cyclic phosphodiester at the end of RNA. The mechanism of action of the enzyme occurs in 3 steps: (A) adenylation of the enzyme by ATP; (B) transfer of adenylate to an RNA-N3'P to produce RNA-N3'PP5'A; (C) and attack of the adjacent 2'-hydroxyl on the 3'-phosphorus in the diester linkage to produce the cyclic end product. The biological role of this enzyme is unknown but it is likely to function in some aspects of cellular RNA processing. The chain is RNA 3'-terminal phosphate cyclase from Metallosphaera sedula (strain ATCC 51363 / DSM 5348 / JCM 9185 / NBRC 15509 / TH2).